The chain runs to 563 residues: Protein disulfide isomerase-like 1-4 (563 aa).

Positions 1-22 are cleaved as a signal peptide; the sequence is MRSRSLLLVALATLLLHASASA. Positions 40–64 are disordered; the sequence is NDPDGWLQEGSPDDDDDDDLFHHGQ. Residues 46 to 180 form the Thioredoxin 1 domain; the sequence is LQEGSPDDDD…IVSWVNKKLA (135 aa). Asn-82 carries N-linked (GlcNAc...) asparagine glycosylation. Residues Cys-102 and Cys-105 each act as nucleophile in the active site. Cys-102 and Cys-105 are joined by a disulfide. N-linked (GlcNAc...) asparagine glycosylation is found at Asn-185 and Asn-315. The Thioredoxin 2 domain occupies 394–523; sequence FLEEKLTPFY…MYKFIKKHAS (130 aa). Residues Cys-444 and Cys-447 each act as nucleophile in the active site. Residues Cys-444 and Cys-447 are joined by a disulfide bond. Basic and acidic residues predominate over residues 529–542; that stretch reads KRPDSSATKTEKDQ. A disordered region spans residues 529 to 563; it reads KRPDSSATKTEKDQSTASTNLRGERSSGTNFKDEL. Positions 543 to 563 are enriched in polar residues; it reads STASTNLRGERSSGTNFKDEL. The short motif at 560 to 563 is the Prevents secretion from ER element; sequence KDEL.

This sequence belongs to the protein disulfide isomerase family.

It is found in the endoplasmic reticulum lumen. The enzyme catalyses Catalyzes the rearrangement of -S-S- bonds in proteins.. Acts as a protein-folding catalyst that interacts with nascent polypeptides to catalyze the formation, isomerization, and reduction or oxidation of disulfide bonds. May play a role in storage protein biogenesis. The protein is Protein disulfide isomerase-like 1-4 (PDIL1-4) of Oryza sativa subsp. japonica (Rice).